Reading from the N-terminus, the 360-residue chain is DNA primase large subunit PriL (360 aa).

[4Fe-4S] cluster-binding residues include Cys-237, Cys-309, Cys-318, and Cys-325. Residues 340 to 360 (DDGDDDDLADWRDREDDDSPD) form a disordered region.

The protein belongs to the eukaryotic-type primase large subunit family. In terms of assembly, heterodimer of a small subunit (PriS) and a large subunit (PriL). Requires [4Fe-4S] cluster as cofactor.

Its function is as follows. Regulatory subunit of DNA primase, an RNA polymerase that catalyzes the synthesis of short RNA molecules used as primers for DNA polymerase during DNA replication. Stabilizes and modulates the activity of the small subunit, increasing the rate of DNA synthesis, and conferring RNA synthesis capability. The DNA polymerase activity may enable DNA primase to also catalyze primer extension after primer synthesis. May also play a role in DNA repair. This is DNA primase large subunit PriL from Halobacterium salinarum (strain ATCC 29341 / DSM 671 / R1).